The following is a 308-amino-acid chain: E3 ubiquitin-protein ligase SINAT2 (308 aa).

An RING-type zinc finger spans residues 60-96 (CPVCTNLMYPPIHQCPNGHTLCSNCKLRVQNTCPTCR). Positions 110 to 303 (VAESLEVPCR…QELKLRVTGR (194 aa)) are SBD. Residues 113-173 (SLEVPCRYQN…LVVHLKDDHK (61 aa)) form an SIAH-type zinc finger. 8 residues coordinate Zn(2+): cysteine 118, cysteine 125, histidine 137, cysteine 141, cysteine 148, cysteine 155, histidine 167, and histidine 172.

Belongs to the SINA (Seven in absentia) family. As to quaternary structure, interacts with RAP2-2. Interacts with SINAT6. Interacts with ATG6 and TRAF1A. Interacts with WAV3. Interacts with FREE1. Interacts with ELC/VPS23A.

Its subcellular location is the endosome. The protein localises to the multivesicular body. It localises to the cytoplasmic vesicle. The protein resides in the autophagosome. The catalysed reaction is S-ubiquitinyl-[E2 ubiquitin-conjugating enzyme]-L-cysteine + [acceptor protein]-L-lysine = [E2 ubiquitin-conjugating enzyme]-L-cysteine + N(6)-ubiquitinyl-[acceptor protein]-L-lysine.. The protein operates within protein modification; protein ubiquitination. E3 ubiquitin-protein ligase that mediates ubiquitination and subsequent proteasomal degradation of target proteins. E3 ubiquitin ligases accept ubiquitin from an E2 ubiquitin-conjugating enzyme in the form of a thioester and then directly transfers the ubiquitin to targeted substrates. It probably triggers the ubiquitin-mediated degradation of different substrates. Mediates the proteasomal-dependent degradation of ATG6, a component of the autophagosome complex. Requires TRAF1A/MUSE14 and TRAF1B/MUSE13 to target ATG6 for ubiquitination and subsequent regulation of autophagosome assembly. Modulates directly the ubiquitination and proteasomal-dependent degradation of FREE1, a component of the ESCRT-I complex. Modulates directly the ubiquitination and proteasomal-dependent degradation of ELC/VPS23A, a component of the ESCRT-I complex. This Arabidopsis thaliana (Mouse-ear cress) protein is E3 ubiquitin-protein ligase SINAT2.